The sequence spans 318 residues: Transaldolase (318 aa).

K132 acts as the Schiff-base intermediate with substrate in catalysis.

It belongs to the transaldolase family. Type 1 subfamily. In terms of assembly, homodimer.

It is found in the cytoplasm. It carries out the reaction D-sedoheptulose 7-phosphate + D-glyceraldehyde 3-phosphate = D-erythrose 4-phosphate + beta-D-fructose 6-phosphate. The protein operates within carbohydrate degradation; pentose phosphate pathway; D-glyceraldehyde 3-phosphate and beta-D-fructose 6-phosphate from D-ribose 5-phosphate and D-xylulose 5-phosphate (non-oxidative stage): step 2/3. Transaldolase is important for the balance of metabolites in the pentose-phosphate pathway. The chain is Transaldolase from Shewanella sp. (strain ANA-3).